The primary structure comprises 99 residues: Glycine-rich protein (99 aa).

The N-terminal stretch at 1 to 18 (MKSMIAVLLLALVATSMA) is a signal peptide.

It belongs to the non-disulfide-bridged peptide (NDBP) superfamily. As to expression, expressed by the venom gland.

It is found in the secreted. In Lychas mucronatus (Chinese swimming scorpion), this protein is Glycine-rich protein.